Here is a 231-residue protein sequence, read N- to C-terminus: Flagellar L-ring protein (231 aa).

Residues 1–18 (MKHLLSVFALGGAVLLAG) form the signal peptide. Residue C19 is the site of N-palmitoyl cysteine attachment. A lipid anchor (S-diacylglycerol cysteine) is attached at C19.

It belongs to the FlgH family. As to quaternary structure, the basal body constitutes a major portion of the flagellar organelle and consists of four rings (L,P,S, and M) mounted on a central rod.

It localises to the cell outer membrane. The protein localises to the bacterial flagellum basal body. Functionally, assembles around the rod to form the L-ring and probably protects the motor/basal body from shearing forces during rotation. This is Flagellar L-ring protein from Pseudomonas entomophila (strain L48).